A 240-amino-acid polypeptide reads, in one-letter code: uncharacterized protein (240 aa).

2 disordered regions span residues 125 to 148 (RRLD…EDVD) and 177 to 240 (DESN…RKSR). Positions 130–148 (SSEDGEEEEENDYIDEDVD) are enriched in acidic residues. Basic and acidic residues predominate over residues 192 to 203 (SPRKSHIDHDFV). Acidic residues predominate over residues 204 to 217 (IPEDEMLSEEEEQE). S231 is modified (phosphoserine).

It belongs to the UTP5 family.

The protein localises to the cytoplasm. Its subcellular location is the nucleus. This is an uncharacterized protein from Schizosaccharomyces pombe (strain 972 / ATCC 24843) (Fission yeast).